The following is a 108-amino-acid chain: Virion membrane protein OPG135 (108 aa).

A signal peptide spans 1–22 (MSCYTAILKSVGGLALFQVANG). Over 23-45 (AIDLCRHFFMYFCEQKLRPNSFW) the chain is Intravirion. A helical membrane pass occupies residues 46-66 (FVVVRAIASMIMYLVLGIALL). The Virion surface segment spans residues 67–83 (YISEQDDKKNTNNANTN). A disordered region spans residues 76 to 108 (NTNNANTNNDSNSNNSNNDKRNESSINSNSSPK). Residues 77–92 (TNNANTNNDSNSNNSN) show a composition bias toward low complexity. Residues Asn-84, Asn-89, and Asn-97 are each glycosylated (N-linked (GlcNAc...) asparagine; by host). Polar residues predominate over residues 99 to 108 (SSINSNSSPK).

It belongs to the oerthopoxvirus OPG135 family.

Its subcellular location is the virion membrane. It localises to the host cytoplasm. Envelope protein. Required for an early step in virion morphogenesis. This Vaccinia virus (strain Western Reserve) (VACV) protein is Virion membrane protein OPG135 (OPG135).